A 163-amino-acid chain; its full sequence is Cyclic pyranopterin monophosphate synthase (163 aa).

Residues 75-77 and 113-114 contribute to the substrate site; these read LCH and ME. Aspartate 128 is a catalytic residue.

The protein belongs to the MoaC family. In terms of assembly, homohexamer; trimer of dimers.

The enzyme catalyses (8S)-3',8-cyclo-7,8-dihydroguanosine 5'-triphosphate = cyclic pyranopterin phosphate + diphosphate. The protein operates within cofactor biosynthesis; molybdopterin biosynthesis. In terms of biological role, catalyzes the conversion of (8S)-3',8-cyclo-7,8-dihydroguanosine 5'-triphosphate to cyclic pyranopterin monophosphate (cPMP). This Magnetococcus marinus (strain ATCC BAA-1437 / JCM 17883 / MC-1) protein is Cyclic pyranopterin monophosphate synthase.